A 1438-amino-acid chain; its full sequence is Pyochelin synthetase PchE (1438 aa).

Positions 6-85 (DSRTALRDWL…AWLDLLACAD (80 aa)) constitute a Carrier 1 domain. Ser46 bears the O-(pantetheine 4'-phosphoryl)serine mark. Positions 136–442 (RTRDVDPQRL…ARRQGQPRSA (307 aa)) are condensation/cyclization. The adenylation stretch occupies residues 563–950 (RAAEAPDADA…GRVDQQVKVR (388 aa)). Positions 1350–1425 (EPLEAHEQAL…GLARHLQAQT (76 aa)) constitute a Carrier 2 domain. Ser1385 is modified (O-(pantetheine 4'-phosphoryl)serine).

Belongs to the NRP synthetase family. Pantetheine 4'-phosphate is required as a cofactor.

The catalysed reaction is holo-[peptidyl-carrier protein] + L-cysteine + ATP = L-cysteinyl-[peptidyl-carrier protein] + AMP + diphosphate. It functions in the pathway siderophore biosynthesis. It participates in antifungal biosynthesis. Involved in the biosynthesis of the siderophore pyochelin. Accepts salicylate activated by PchD at the first peptidyl carrier domain (ArCP), and activates and fixes one molecule of cysteine at the second peptidyl carrier domain (PCP1) via a thioester linkage to the phosphopanthetheine moiety. Then catalyzes the condensation reaction between the salicylate bound to the first site and the cysteine bound to the second site, and the cyclization of the cysteine to form the salicyl-thiazolinyl-S-PCP1 intermediate at the second site. When this intermediate is released by the action of a thioesterase, it produces the antifungal antibiotic dihydroaeruginoic acid (Dha or hydroxyphenyl-thiazolinyl-carboxylate). The chain is Pyochelin synthetase PchE from Pseudomonas aeruginosa (strain UCBPP-PA14).